The following is a 274-amino-acid chain: Cytochrome c oxidase subunit 3 (274 aa).

At 2 to 15 (AHVKNHDYQILPPS) the chain is on the cytoplasmic side. A helical membrane pass occupies residues 16–36 (IWPFFGAIGAFVMLTGAVAWM). At 37–48 (KGITFFGLPVEG) the chain is on the periplasmic side. The helical transmembrane segment at 49-77 (PWMFLIGLVGVLYVMFGWWADVVNEGETG) threads the bilayer. The Cytoplasmic segment spans residues 78–79 (EH). Residues 80–115 (TPVVRIGLQYGFILFIMSEVMFFVAWFWAFIKNALY) form a helical membrane-spanning segment. Residues 116-139 (PMGPDSPIKDGVWPPEGIVTFDPW) are Periplasmic-facing. The helical transmembrane segment at 140-166 (HLPLINTLILLLSGVAVTWAHHAFVLE) threads the bilayer. The Cytoplasmic segment spans residues 167–168 (GD). The helical transmembrane segment at 169-197 (RKTTINGLIVAVILGVCFTGLQAYEYSHA) threads the bilayer. Over 198–203 (AFGLAD) the chain is Periplasmic. Residues 204-237 (TVYAGAFYMATGFHGAHVIIGTIFLFVCLIRLLK) traverse the membrane as a helical segment. Residues 238 to 244 (GQMTQKQ) lie on the Cytoplasmic side of the membrane. Residues 245-274 (HVGFEAAAWYWHFVDVVWLFLFVVIYIWGR) form a helical membrane-spanning segment.

This sequence belongs to the cytochrome c oxidase subunit 3 family.

It is found in the cell inner membrane. The catalysed reaction is 4 Fe(II)-[cytochrome c] + O2 + 8 H(+)(in) = 4 Fe(III)-[cytochrome c] + 2 H2O + 4 H(+)(out). The sequence is that of Cytochrome c oxidase subunit 3 (ctaE) from Paracoccus denitrificans.